The sequence spans 130 residues: Small ribosomal subunit protein uS11 (130 aa).

It belongs to the universal ribosomal protein uS11 family. Part of the 30S ribosomal subunit. Interacts with proteins S7 and S18. Binds to IF-3.

Its function is as follows. Located on the platform of the 30S subunit, it bridges several disparate RNA helices of the 16S rRNA. Forms part of the Shine-Dalgarno cleft in the 70S ribosome. This Latilactobacillus sakei subsp. sakei (strain 23K) (Lactobacillus sakei subsp. sakei) protein is Small ribosomal subunit protein uS11.